We begin with the raw amino-acid sequence, 181 residues long: uncharacterized protein (181 aa).

One can recognise an N-acetyltransferase domain in the interval 1–159 (MTVHHFTFHI…KACWMMQSLT (159 aa)).

It belongs to the acetyltransferase family.

This is an uncharacterized protein from Escherichia coli (strain K12).